The chain runs to 1035 residues: POM121-like protein 2 (1035 aa).

6 disordered regions span residues 1-37 (MGSF…PLHQ), 177-213 (LFPE…PRPG), 286-343 (IKKE…LGYA), 415-508 (LGPL…QSTL), 754-791 (SPLG…QPAL), and 972-1035 (NTPV…AYKK). Over residues 27–37 (TKRRPPQPLHQ) the composition is skewed to basic residues. Positions 309–319 (GGSESSGQQNQ) are enriched in low complexity. Polar residues-rich tracts occupy residues 320–330 (KIPQLPSSPEN), 420–431 (SPQSTGEATSVA), and 445–462 (GCSQ…SKPT). Positions 464-481 (TFILLTPTSPTLPVTDTT) are enriched in low complexity. Over residues 493–502 (PMPPDPPAPP) the composition is skewed to pro residues. The segment covering 1000 to 1016 (RGPFRSSASSFSIGAKS) has biased composition (low complexity). Positions 1017-1035 (KTPKNREKGHSRRHHAYKK) are enriched in basic residues.

The protein belongs to the POM121 family.

This chain is POM121-like protein 2 (POM121L2), found in Homo sapiens (Human).